Reading from the N-terminus, the 500-residue chain is Glycerol kinase (500 aa).

Thr12 contacts ADP. ATP contacts are provided by Thr12, Thr13, and Ser14. Position 12 (Thr12) interacts with sn-glycerol 3-phosphate. Arg16 serves as a coordination point for ADP. Sn-glycerol 3-phosphate-binding residues include Arg82, Glu83, Tyr134, and Asp243. Glycerol-binding residues include Arg82, Glu83, Tyr134, Asp243, and Gln244. ADP contacts are provided by Thr265 and Gly308. Thr265, Gly308, Gln312, and Gly411 together coordinate ATP. Gly411 is an ADP binding site.

It belongs to the FGGY kinase family.

It carries out the reaction glycerol + ATP = sn-glycerol 3-phosphate + ADP + H(+). It functions in the pathway polyol metabolism; glycerol degradation via glycerol kinase pathway; sn-glycerol 3-phosphate from glycerol: step 1/1. With respect to regulation, inhibited by fructose 1,6-bisphosphate (FBP). Functionally, key enzyme in the regulation of glycerol uptake and metabolism. Catalyzes the phosphorylation of glycerol to yield sn-glycerol 3-phosphate. In Chelativorans sp. (strain BNC1), this protein is Glycerol kinase.